Consider the following 554-residue polypeptide: MALRVAAFDLDGVLALPSIAGVLRHTEEALALPRDFLLGAFQMKFPEGPTEQLMKGKITFSQWVPLMDESCRKSSKACGASLPENFSISEIFSQAMAARSINRPMLQAAAALKKKGFTTCIVTNNWLDDSDKRDILAQMMCELSQHFDFLIESCQVGMIKPEPQIYKFVLDTLKAKPNEVVFLDDFGSNLKPARDMGMVTILVRDTASALRELEKVTGTQFPEAPLPVPCSPNDVSHGYVTVKPGIRLHFVEMGSGPAICLCHGFPESWFSWRYQIPALAQAGFRVLAIDMKGYGDSSSPPEIEEYAMELLCEEMVTFLNKLGIPQAVFIGHDWAGVLVWNMALFHPERVRAVASLNTPLMPPNPEVSPMEVIRSIPVFNYQLYFQEPGVAEAELEKNMSRTFKSFFRTSDDMGLLTVNKATEMGGILVGTPEDPKVSKITTEEEIEYYIQQFKKSGFRGPLNWYRNTERNWKWSCKALGRKILVPALMVTAEKDIVLRPEMSKNMENWIPFLKRGHIEDCGHWTQIEKPAEVNQILIKWLKTEIQNPSVTSKI.

Residues 1-224 (MALRVAAFDL…KVTGTQFPEA (224 aa)) are phosphatase. D9 and D11 together coordinate Mg(2+). Residue K55 is modified to N6-succinyllysine. 123–124 (TN) provides a ligand contact to phosphate. An N6-acetyllysine; alternate modification is found at K176. N6-succinyllysine; alternate is present on K176. D185 contributes to the Mg(2+) binding site. An N6-acetyllysine mark is found at K191 and K215. The interval 233–554 (NDVSHGYVTV…IQNPSVTSKI (322 aa)) is epoxide hydrolase. One can recognise an AB hydrolase-1 domain in the interval 257–530 (PAICLCHGFP…CGHWTQIEKP (274 aa)). Residue D333 is the Nucleophile of the active site. Phosphoserine is present on S368. Position 381 (Y381) interacts with substrate. N6-succinyllysine is present on residues K420 and K454. The active-site Proton donor is Y465. An N6-succinyllysine modification is found at K504. C521 is lipidated: S-(15-deoxy-Delta12,14-prostaglandin J2-9-yl)cysteine. Catalysis depends on H523, which acts as the Proton acceptor. The Microbody targeting signal motif lies at 552-554 (SKI). The residue at position 553 (K553) is an N6-succinyllysine.

Belongs to the AB hydrolase superfamily. Epoxide hydrolase family. In terms of assembly, homodimer. Requires Mg(2+) as cofactor. In terms of processing, the covalent modification of cysteine by 15-deoxy-Delta12,14-prostaglandin-J2 is autocatalytic and reversible. It may occur as an alternative to other cysteine modifications, such as S-nitrosylation and S-palmitoylation.

It is found in the cytoplasm. The protein localises to the peroxisome. It carries out the reaction an epoxide + H2O = an ethanediol. It catalyses the reaction (9S,10S)-10-hydroxy-9-(phosphooxy)octadecanoate + H2O = (9S,10S)-9,10-dihydroxyoctadecanoate + phosphate. The catalysed reaction is 8-hydroxy-(11S,12S)-epoxy-(5Z,9E,14Z)-eicosatrienoate + H2O = (8,11R,12S)-trihydroxy-(5Z,9E,14Z)-eicosatrienoate. The enzyme catalyses 10-hydroxy-(11S,12S)-epoxy- (5Z,8Z,14Z)-eicosatrienoate + H2O = (10,11S,12R)-trihydroxy-(5Z,8Z,14Z)-eicosatrienoate. It carries out the reaction 12-phosphooxy-(9Z)-octadecenoate + H2O = 12-hydroxy-(9Z)-octadecenoate + phosphate. It catalyses the reaction 12-phosphooxy-(9E)-octadecenoate + H2O = 12-hydroxy-(9E)-octadecenoate + phosphate. The catalysed reaction is 12-(phosphooxy)octadecanoate + H2O = 12-hydroxyoctadecanoate + phosphate. The enzyme catalyses 8,9-epoxy-(5Z,11Z,14Z)-eicosatrienoate + H2O = 8,9-dihydroxy-(5Z,11Z,14Z)-eicosatrienoate. It carries out the reaction 11,12-epoxy-(5Z,8Z,14Z)-eicosatrienoate + H2O = 11,12-dihydroxy-(5Z,8Z,14Z)-eicosatrienoate. It catalyses the reaction 14,15-epoxy-(5Z,8Z,11Z)-eicosatrienoate + H2O = 14,15-dihydroxy-(5Z,8Z,11Z)-eicosatrienoate. The catalysed reaction is 9,10-epoxy-(12Z)-octadecenoate + H2O = 9,10-dihydroxy-(12Z)-octadecenoate. The enzyme catalyses 1-tetradecanoyl-sn-glycerol 3-phosphate + H2O = 1-tetradecanoyl-sn-glycerol + phosphate. It carries out the reaction 1-octadecanoyl-sn-glycero-3-phosphate + H2O = 1-octadecanoyl-sn-glycerol + phosphate. It catalyses the reaction 1-(5Z,8Z,11Z,14Z-eicosatetraenoyl)-sn-glycero-3-phosphate + H2O = 1-(5Z,8Z,11Z,14Z-eicosatetraenoyl)-sn-glycerol + phosphate. The catalysed reaction is 1-hexadecanoyl-sn-glycero-3-phosphate + H2O = 1-hexadecanoyl-sn-glycerol + phosphate. The enzyme catalyses 1-(9Z-octadecenoyl)-sn-glycero-3-phosphate + H2O = 1-(9Z-octadecenoyl)-sn-glycerol + phosphate. It carries out the reaction (8S,9R)-epoxy-(5Z,11Z,14Z)-eicosatrienoate + H2O = (8S,9S)-dihydroxy-(5Z,11Z,14Z)-eicosatrienoate. It catalyses the reaction (11S,12R)-epoxy-(5Z,8Z,14Z)-eicosatrienoate + H2O = (11R,12R)-dihydroxy-(5Z,8Z,14Z)-eicosatrienoate. The catalysed reaction is (11S,12R)-epoxy-(5Z,8Z,14Z)-eicosatrienoate + H2O = (11S,12S)-dihydroxy-(5Z,8Z,14Z)-eicosatrienoate. The enzyme catalyses (14S,15R)-epoxy-(5Z,8Z,11Z)-eicosatrienoate + H2O = (14R,15R)-dihydroxy-(5Z,8Z,11Z)-eicosatrienoate. It carries out the reaction (14S,15R)-epoxy-(5Z,8Z,11Z)-eicosatrienoate + H2O = (14S,15S)-dihydroxy-(5Z,8Z,11Z)-eicosatrienoate. It catalyses the reaction (11R,12S)-epoxy-(5Z,8Z,14Z)-eicosatrienoate + H2O = (11S,12S)-dihydroxy-(5Z,8Z,14Z)-eicosatrienoate. The catalysed reaction is (11R,12S)-epoxy-(5Z,8Z,14Z)-eicosatrienoate + H2O = (11R,12R)-dihydroxy-(5Z,8Z,14Z)-eicosatrienoate. The enzyme catalyses (8S,9R)-epoxy-(5Z,11Z,14Z)-eicosatrienoate + H2O = (8R,9R)-dihydroxy-(5Z,11Z,14Z)-eicosatrienoate. It carries out the reaction (14R,15S)-epoxy-(5Z,8Z,11Z)-eicosatrienoate + H2O = (14R,15R)-dihydroxy-(5Z,8Z,11Z)-eicosatrienoate. Inhibited by 1-(1-acetylpiperidin-4-yl)-3-(4-(trifl uoromethoxy)phenyl)urea (TPAU), 1-cyclohexyl-3-dodecylurea (CDU), 12-(3-adamantan-1-yl-ureido)-dodecanoic acid (AUDA), 1-((3S, 5S, 7S)-adamantan-1-yl)-3-(5-(2-(2-ethoxyethoxy) ethoxy)pentyl)urea (AEPU), N-adamantyl-N[']-cyclohexyl urea (ACU), 4-(((1S, 4S)-4-(3-((3S, 5S, 7S)-adamantan-1-yl) ureido)cyclohexyl)oxy)benzoic acid (c-AUCB), 4-(((1R, 4R)-4-(3-((3S, 5S, 7S)-adamantan-1-yl)ureido)cyclohexyl)oxy)benzoic acid (t-AUCB), 4-(((1R, 4R)-4-(3-(4(trifluoromethoxy)phenyl)ureido)cyclohexyl)oxy)benzoic acid (t-TAUCB) and to a lesser extent by 8-(3-((3S, 5S, 7S)-adamantan-1-yl)ureido) octanoic acid (AUOA). Phosphatase activity is inhibited by dodecyl-phosphate, phospholipids such as phospho-lysophosphatidic acids and fatty acids such as palmitic acid and lauric acid. Its function is as follows. Bifunctional enzyme. The C-terminal domain has epoxide hydrolase activity and acts on epoxides (alkene oxides, oxiranes) and arene oxides. Plays a role in xenobiotic metabolism by degrading potentially toxic epoxides. Also determines steady-state levels of physiological mediators. The N-terminal domain has lipid phosphatase activity, with the highest activity towards threo-9,10-phosphonooxy-hydroxy-octadecanoic acid, followed by erythro-9,10-phosphonooxy-hydroxy-octadecanoic acid, 12-phosphonooxy-octadec-9Z-enoic acid and 12-phosphonooxy-octadec-9E-enoic acid. Bifunctional enzyme. The C-terminal domain has epoxide hydrolase activity and acts on epoxides (alkene oxides, oxiranes) and arene oxides. Plays a role in xenobiotic metabolism by degrading potentially toxic epoxides. Also determines steady-state levels of physiological mediators. Functionally, bifunctional enzyme. The N-terminal domain has lipid phosphatase activity, with the highest activity towards threo-9,10-phosphonooxy-hydroxy-octadecanoic acid, followed by erythro-9,10-phosphonooxy-hydroxy-octadecanoic acid, 12-phosphonooxy-octadec-9Z-enoic acid and 12-phosphonooxy-octadec-9E-enoic acid. Has phosphatase activity toward lyso-glycerophospholipids with also some lower activity toward lysolipids of sphingolipid and isoprenoid phosphates. The chain is Bifunctional epoxide hydrolase 2 from Rattus norvegicus (Rat).